Reading from the N-terminus, the 151-residue chain is Small ribosomal subunit protein uS19 (151 aa).

This sequence belongs to the universal ribosomal protein uS19 family.

This chain is Small ribosomal subunit protein uS19 (RPS15), found in Picea mariana (Black spruce).